Consider the following 5087-residue polypeptide: MDSFLCDRYTQFPSLNYGAEDVPSQASATWELDNVTDLNRLILAWASILSRLSEEESPVIQIDGAAARIHLESGRIESVQIEKSGNSGSRTAILTSDTPITSERCQLEIRYTPHQLHGSITSRGCTSVRYLDQLARNLESLLREPLPLSIVNPTPLILPGPRLFHEMVRHTGNEPAISFLNESGEVEDLSYEMLHSLSEQLASHLVHILASLPPPGQHGKIIPVLLPQSLDLYVAWLAILKAGAAVCPLNLDTPSERLNFIVGDVDARVVVTNEGLTSAFQNIETSITIVKMEEIKTFAPGCLSSVDVCNEDLAYVMYTSGSTGLPKGVGISHQAAVQALLAHDEIIPGFRRFLQFAAPTFDVSVFEIFFPLFRGVTLVGCNRRLMLNDLPGIINQLNIDAAELTPTVCGELLQSRDAVPCLKLLLTIGEMLTRHVVDEFGSSKDRPGLLHGMYGPTEATIHCTAVSSVRAGSLVGNIGTPFKTVSAFIISMDHIVGQEPVILPVGHVGELVVGGPQLARYYLNRPTENRNAFIDSKTYGRLYRTGDKARLHPNGELQCMGRISTGQVKLRGQRIELGEIENVLLKNQYVRNVAACVIQGALVAFLSADVAHCTSRDLQLTCRRSLPKFMIPGNFVILNKLPRLPSGKIDRKGLEAEYILSKGVDQTDLAEPAGDIEQKISVSLNLLLESSLTPTASLASAGLDSLRAIHLASSLRKEGVFLNALDILEADSIRKMAALVLKSQPEVTVIPTESEPLKMWNTIIQQGHEMLKLTENLQQPTDIIPCSPIQTGMLLETKLNPKAYFNSVELQFDRGISLEDVKSAFLSTALQNEVLRSGFIEIDFPGFPYAQVVWESLHPDQIIESKIFDHNLELQNQWDILHPLRVQLCVIDGQPKALVHIHHSLYDGWSWDQIMRDLVSALENKQLTQRPQYRLFTLFHINNHSSEIREQALNYWRSHLQGSTPCLWPNFQDRSDLPKVTQVVERQFNVDIDQLDSFVRDFRISRQTIFQAAIGYLLSAYNGTSDIILGNVSAGRTLPIDGIESIVGPCISTLPLRLNLQKARTVRDLLAILHGLNRKSLVHGFVPLRDVKQVSGINTADQLFDTLFVWQDNFTTVCGPIAQVTSRDFLEFTLTTELGIQDGKIWAKATFEESILPESHVVIFLKQIESIAMTFLESADRLLEDIPFHLPESLLSMENNFPPPLKSVPGLSDSVEELAKTDSERIAVEFLDSLDPETGDRAIKTLTYSELDAQSNKLAGQLRNLGVVEGNLVAICLEKSLELYISILAVIKAGAGYVPITPQTPIMRMKHIIQQASCRICIADSEIQAELSDVPNTTAMLAKPQILVENALYEFPKAPGSCPAYAVFTSGTTGTPKGVLISRFNLESNIAVLSALYPDFPESRLLQACSHAFDVSVFEIFFAWSRGMTLCSAKNDVLFRDIELAIRKMRITHLSMTPTVAALVRANNVPLVKFLVTAGEALTPKVRMDWAGKGLWQGYGPSETTNICTVKPNICMSHFISNIGRPLPNTSVFVLAEGERFSLVPRGAVGELCFGGDQVGIGYLNMEDLTRQKFLIHEAYGRIYKSGDYGRLLPDGSIAFVGRRDDLVKIRGQRIELGEITSVLMTHENVKDCATIVCDSNNGDSGDSKQLISFWVPDNINIDGLGQHENSHIFQQLFDYIGDHLPSYMIPSFLIPISHIPMTTIGRKIDKEALKYMYLSANPTLLDVYSRGKEEEHTQENLTDNEAKVAGLVAQVTGVSTKEIGRHTSFYRLGFDSVIAIALSRELKLAGFGQIDISVIMKNDSIARLTRKISQSIEAQMPSLESIPTFDHLFSRELIRKIKDEASSHGVNVTKILPCTSLQEGMLSGISTGNDASYYNHLVFEINRNIELLKTAWMKMVARHDILRTWFRQTDDARFPFVQVVLERLDIAWQSIECPIADAPSTLEKSKLAVAVKEGPHSLYSFTVLQCVDSPKVFLLLSIHHALYDGEAMEVLLQEVQECLLEHQLPPVVPFDLYLHEMIKVNSDSTDQFWSNYLKDFTPTLFTSPSSLVKGSPKMSRSTSHIPSSSFTEVCNACKSSSVTTLSLLQAAWSRLICLLSGSPDICFGDVVNCRSIPIDGAQRIVGPCFNTLPVRTSLNGNMTNIDLMRNLQSNRAATLPYQLSSMRRIQSRFSQRGQRIFDSLLLLQGRPLQLNESLWRMVSENGVMDFPIIFEIIPHPESDSLQFIFHFDEGLVPTTDIDTITACYHAILNHTLRFPEARVMDFSLVESDGQVSGGLSVFRKLGEANGDHKSNGYGKSEEWSAESLEIRNLLSAMSKIDKKRINMDTTIFELGLDSINAIQIAGHFRKVGYEISAADILEGPSIREIASVLQGSKSSPCVGLALHNFDFDSFQSLHLPSICDKLGLLESSVEAIRPCTTPQAGMLASFINSEGLLYFNSFTLKSPTPLNLIALRFVWESVMERNEMLRTGFCEVKDDIFPFAMVTYRPGIIELPWNECLSPSKRMSDARHEQHLNGKSILNQLHRPPWFLTVKPCSDSTLMQLSAHHALYDAHSMNLILSEVINVYNGSTLPPAIPVSSVLGFIVEKFQSPESESYWSEVGPSFSATKFPDMNPLHAKVNDTRFLSRDCSFTMEKLQKGCRELGVTLQAVGQAAWSRILSSYVGESNVTYGLVLSGRDISEQAQDTAFPCLTTVPAHQNVEATNRELLQQIMKSNAMAVKYQFTSLTKIQRLSKADSPLFDTLFVFQKLASTDKQQPLWDVVEESSQTEYSVSLELIPSSDTLKLALTYQNHILPDGQASLLLDELDWLLTHILQYPDSTSSSLDTASRSIVSVLPRKDSKIDCPTQLLHEFVEVGATRHPSRVALEFAERINGKLITQSWTYKDLDEQGNRYANLLHHLGVKQGTLVGVSFQKCPEAYFSILGVLKVGCAFLAIDPSAPIARKQFILDDSKADILMCGMEQQDELKSLTGIRLVPVNEEGLLDGVNSTPPTLSFPLHGDATCYCLYTSGSTGTPKGCEITHDNAVQAMLSFQRLFGGHWDESSRWFQFASFHFDVSVLEQYWTWSVGICLTSCPRDTLFEDFAGTLRDLSITHIDLTPSLAQLIQPEDVPSLCRGVFITGGEKLKQEILEQWGPHEVIYNGYGPTEVTIGCTMLPRVTSSDKPTNIGPQFDNVSGYVFKQGTNTPVLRGGIGELCVSGPLVGKGYLNRPQLTAEKFQYIETYGERVYRTGDLVRMMHDESFCFLGRIDDQVKLRGQRLEINEINHVIKNSTEEVGDVVTMVLKHPTATKEQIVSFTTVVTSASTAACPEVDFSPEAGRVLEAIRSECRSHLPGYMIPTHIIPLTRFPLSSNNKIDNGQLRGIFASMLLSEMQALSSHEQESPTEDTDTIRKIIPILSRFTKVEEKTISSSSNIFELGLDSILVISFSRALREAGCPAAHPSVVMKCSTLSLLAKAVESPDNNVEGERRQYEDAKQKIAAFAHMHMSHLANELEVAPQDIEAITPCTSLQDGMLYQCLRNESHPYLTSFTFQLAPHTDIPMLKEAWKRAQVSFQLLRTKFPLTDDGYALVVLKEAALPWFEFAISKDDELESTAESYFKEWNLGFNNFMGRVWEIGIISSPKRRWMCLNIFHGLYDGISLPIILDAVKHVYNGGQMPRSMPFTEVLPLGPLRTVPAAKSFWAKHLENLSQTTIPRRSLPEPGSRTSTIRIEGFHCIEETRRSLNVTEKAMFHACWVYTFERYFNYIPTMGIVVSGRSFDSEDADVAVGPLFNTIPCNIPKFSFSTFSELIQACHDYSVSALPFQHTPLRSIMKWIGRSSQRPLFDVLFVFQKQENITSQSGESLWEPVASFTEADYPLALEVQSQGSGSFQVTAACQGDILTSDGISDLLEQFRLSLRSLVEEPFSNLSFSGNSTSLEASSKQIANKVIGGPSPNVTTSFQWSQAASLLRQEIAKLANLDVSEINEDSSVLEVGLDSIDAIKLSSRLKRDHIDLSVGNIMRNRTIRTMMAEVTVNGSATKADLTYLKSLESQLRRSLEEDGKDLGDIEHIYPATPLQEGMINEMLSSDGLHYFNHDILQISEDVDVTMLKNAWETIAKRHPILRTSFATVSDPNLPFSYAQLIHKSSIKIDWDIVDIAENSIESILQEERARALSLVMSKPLFNLRLIRDGAKLLLILSLPHAMYDGWSLTLLHQDVASAYSGQFSARPSYQHVLEDIISSSRDEGLQFWKGVLSDAEPSIFPPQPGAGDQGALVHRDETASDIPLSHVLNFCKAHGVTAQALGLTCWTIVLASYLGQLDVLFGTVMLGRDTEEASKVAFPTMNTVAVRGILHGSVSEMLEYVQRNLGNMLAHQHYPLRKIKSMMGVGNKDLFDTLFIYQKSPSSQEGQDKPLYKSINSSSSVEYSICVELEAIDDSAVWRVACKDTILGKKDTSQLVLQLLQVFKTIIQSPEIPTAGFVEVRERPTLDSVTQNGGSLPDGPGGIAIEPVVWSLLEERIRDTLSLVAAVPKEEITRNTTIFHFGIDSISAIKVSSLLRRQSVLISVRDILRAETVGKMAEIVNSAREKKPTTATSREKLLSLQTLKNSNIDLQLRKYGMKREDVEVFLPATAGQVYMLETWKNSHGKLFFPDFFYRVTGRITQSQLDNAWKVMTAKLPILRTTILSIGDTGMPYVLAELKQVSNPIIWRSDLRVKSNRRHVAARQGSGLVYLYASQTETETLLMLHIHHALYDAVALQHLINILESLFQDVSTPVNTPVDIAEFIQYGKAMSSEAQQEAFWKGYLGNDITPVAKKGSGPVMDVQAGAGKYQPGLLDNTDWLNKICQAEGLSVQAVFLAAYSKVHVREFHVRGADLTVGVYLANRSHDLVGLPELVAPTLNIVPLRIQDPGSRSVFELARIIQSDLHEIGSAENCTVSLAQIAEWTGIRLDTTVNFIKLPEVAAQVSTATSGAPQLVQVTEEEVLEWLSKESCNSNGSEQVDAAAKGSSSKLWLEEMLGIESGVGLENAGDVYKVSPPGSQLSQDSPEKQEANNKPSPQPSVDIEAAVRNNTLDVGVFGPSSDKALGVLDGVRRELLALQTSSAR.

The tract at residues H165–I563 is adenylation 1. Residues E671–Q744 form the Carrier 1 domain. S705 carries the post-translational modification O-(pantetheine 4'-phosphoryl)serine. The condensation 1 stretch occupies residues D782 to D1112. An adenylation 2 region spans residues E1217–R1611. The region spanning E1740 to I1817 is the Carrier 2 domain. An O-(pantetheine 4'-phosphoryl)serine modification is found at S1777. The condensation 2 stretch occupies residues K1855–S2272. Residues E2302–K2378 enclose the Carrier 3 domain. S2339 is subject to O-(pantetheine 4'-phosphoryl)serine. The tract at residues P2419–S2831 is condensation 3. The segment at A2860–R3258 is adenylation 3. The Carrier 4 domain maps to T3387–D3464. S3424 carries the post-translational modification O-(pantetheine 4'-phosphoryl)serine. The interval I3506–N3910 is condensation 4. The Carrier 5 domain occupies F3943–G4019. Residue S3980 is modified to O-(pantetheine 4'-phosphoryl)serine. The condensation 5 stretch occupies residues E4051–A4416. In terms of domain architecture, Carrier 6 spans S4496–R4569. Position 4530 is an O-(pantetheine 4'-phosphoryl)serine (S4530). Residues F4610–S4913 are condensation 6. The interval D5013–A5048 is disordered.

The protein belongs to the NRP synthetase family.

It participates in siderophore biosynthesis. In terms of biological role, nonribosomal peptide synthetase; part of the siderophore biosynthetic pathway. Arthroderma benhamiae produces 2 types of extracellular siderophores, ferrichrome C and ferricrocin. The biosynthesis of these siderophores depends on the hydroxylation of ornithine to N(5)-hydroxyornithine, catalyzed by the monooxygenase sidA. The structure of ferricrocin differs from ferrichrome C only by a serine for alanine substitution and the assembly of both siderophores is suggested to be performed by the nonribosomal peptide synthase (NRPS) sidC. The chain is Nonribosomal peptide synthetase sidC from Arthroderma benhamiae (strain ATCC MYA-4681 / CBS 112371) (Trichophyton mentagrophytes).